A 420-amino-acid polypeptide reads, in one-letter code: Zinc finger and BTB domain-containing protein 42 (420 aa).

One can recognise a BTB domain in the interval 24-92 (CDCTVLVGDA…MYEGRLDLHS (69 aa)). Disordered stretches follow at residues 174–204 (PPSWQVSEESSGALDLSLKPGPRPEQAHPPC) and 216–248 (QGAQPLVKAEQDSFSEQDSSSPQSADRSPPPVC). Residues 227–241 (DSFSEQDSSSPQSAD) show a composition bias toward low complexity. 4 consecutive C2H2-type zinc fingers follow at residues 292-314 (CICPLCCKLFPSTHALQPHLSAH), 332-354 (PTCPLCSKTFSCTYTLKRHERTH), 360-382 (YTCVQCGKSFQYSHNLSRHAVVH), and 388-411 (HACRWCERRFTQSGDLYRHVRKFH).

The protein belongs to the krueppel C2H2-type zinc-finger protein family. ZBTB18 subfamily.

The protein localises to the cytoplasm. It localises to the nucleus. It is found in the nucleoplasm. Its function is as follows. Transcriptional repressor. Specifically binds DNA and probably acts by recruiting chromatin remodeling multiprotein complexes. The polypeptide is Zinc finger and BTB domain-containing protein 42 (Zbtb42) (Rattus norvegicus (Rat)).